Here is a 557-residue protein sequence, read N- to C-terminus: 2-succinyl-5-enolpyruvyl-6-hydroxy-3-cyclohexene-1-carboxylate synthase (557 aa).

It belongs to the TPP enzyme family. MenD subfamily. Homodimer. The cofactor is Mg(2+). Mn(2+) serves as cofactor. Thiamine diphosphate is required as a cofactor.

The enzyme catalyses isochorismate + 2-oxoglutarate + H(+) = 5-enolpyruvoyl-6-hydroxy-2-succinyl-cyclohex-3-ene-1-carboxylate + CO2. It functions in the pathway quinol/quinone metabolism; 1,4-dihydroxy-2-naphthoate biosynthesis; 1,4-dihydroxy-2-naphthoate from chorismate: step 2/7. It participates in quinol/quinone metabolism; menaquinone biosynthesis. In terms of biological role, catalyzes the thiamine diphosphate-dependent decarboxylation of 2-oxoglutarate and the subsequent addition of the resulting succinic semialdehyde-thiamine pyrophosphate anion to isochorismate to yield 2-succinyl-5-enolpyruvyl-6-hydroxy-3-cyclohexene-1-carboxylate (SEPHCHC). The sequence is that of 2-succinyl-5-enolpyruvyl-6-hydroxy-3-cyclohexene-1-carboxylate synthase from Phocaeicola vulgatus (strain ATCC 8482 / DSM 1447 / JCM 5826 / CCUG 4940 / NBRC 14291 / NCTC 11154) (Bacteroides vulgatus).